Consider the following 181-residue polypeptide: Transcription termination/antitermination protein NusG (181 aa).

Residues 130 to 161 (PGEMIRVNDGPFADFNGVVEEVDYEKSRLKVS) form the KOW domain.

The protein belongs to the NusG family. Monomer. Interacts with the transcription termination factor Rho and with RNA polymerase.

Its function is as follows. Participates in transcription elongation, termination and antitermination. In the absence of Rho, increases the rate of transcription elongation by the RNA polymerase (RNAP), probably by partially suppressing pausing. In the presence of Rho, modulates most Rho-dependent termination events by interacting with the RNAP to render the complex more susceptible to the termination activity of Rho. May be required to overcome a kinetic limitation of Rho to function at certain terminators. Also involved in ribosomal RNA transcriptional antitermination. In Buchnera aphidicola subsp. Acyrthosiphon pisum (strain APS) (Acyrthosiphon pisum symbiotic bacterium), this protein is Transcription termination/antitermination protein NusG.